A 1035-amino-acid chain; its full sequence is Enteropeptidase (1035 aa).

The N-myristoyl glycine moiety is linked to residue G2. Residues 2 to 18 (GSKRSVPSRHRSLTTYE) are Cytoplasmic-facing. Residues 19 to 47 (VMFAVLFVILVALCAGLIAVSWLSIQGSV) traverse the membrane as a helical; Signal-anchor for type II membrane protein segment. Over 48-1035 (KDAAFGKSHE…FTEWIQSFLH (988 aa)) the chain is Extracellular. Positions 54 to 169 (KSHEARGTLK…NSIDITASLE (116 aa)) constitute an SEA domain. 4 N-linked (GlcNAc...) asparagine glycosylation sites follow: N116, N147, N170, and N194. One can recognise an LDL-receptor class A 1 domain in the interval 197–238 (IECPPDSRLCADALKCIAIDLFCDGELNCPDGSDEDNKTCAT). 4 disulfide bridges follow: C199–C212, C206–C225, C219–C236, and C240–C269. N-linked (GlcNAc...) asparagine glycans are attached at residues N233, N263, N264, N404, N456, N486, N519, N550, and N646. Residues 240–350 (CDGRFLLTGS…IGFKVTYTAF (111 aa)) form the CUB 1 domain. The MAM domain occupies 358 to 520 (YEKINCNFED…ISLTYGICNV (163 aa)). C540 and C568 are joined by a disulfide. The CUB 2 domain occupies 540–650 (CGGPHDLWEP…QGFKANFTTG (111 aa)). Positions 657–695 (EPCKEDNFQCKDGECIPLVNLCDGFPHCKDGSDEAHCVR) constitute an LDL-receptor class A 2 domain. 3 disulfides stabilise this stretch: C659-C671, C666-C684, and C678-C693. One can recognise an SRCR domain in the interval 694–787 (VRLFNGTTDS…LILLQCNYKS (94 aa)). Residues N698, N722, N741, and N762 are each glycosylated (N-linked (GlcNAc...) asparagine). 6 cysteine pairs are disulfide-bonded: C773–C783, C788–C912, C826–C842, C926–C993, C957–C972, and C983–C1011. The 235-residue stretch at 801-1035 (IVGGSDSREG…FTEWIQSFLH (235 aa)) folds into the Peptidase S1 domain. H841 serves as the catalytic Charge relay system. N864 is a glycosylation site (N-linked (GlcNAc...) asparagine). Residue D892 is the Charge relay system of the active site. 2 N-linked (GlcNAc...) asparagine glycosylation sites follow: N903 and N965. The active-site Charge relay system is S987.

The protein belongs to the peptidase S1 family. In terms of assembly, heterodimer of a catalytic (light) chain and a multidomain (heavy) chain linked by a disulfide bond. In terms of processing, the chains are derived from a single precursor that is cleaved by a trypsin-like protease. Intestinal brush border.

The protein resides in the membrane. The enzyme catalyses Activation of trypsinogen by selective cleavage of 6-Lys-|-Ile-7 bond.. In terms of biological role, responsible for initiating activation of pancreatic proteolytic proenzymes (trypsin, chymotrypsin and carboxypeptidase A). It catalyzes the conversion of trypsinogen to trypsin which in turn activates other proenzymes including chymotrypsinogen, procarboxypeptidases, and proelastases. In Bos taurus (Bovine), this protein is Enteropeptidase (TMPRSS15).